The chain runs to 121 residues: Large ribosomal subunit protein bL12 (121 aa).

Belongs to the bacterial ribosomal protein bL12 family. As to quaternary structure, homodimer. Part of the ribosomal stalk of the 50S ribosomal subunit. Forms a multimeric L10(L12)X complex, where L10 forms an elongated spine to which 2 to 4 L12 dimers bind in a sequential fashion. Binds GTP-bound translation factors.

Forms part of the ribosomal stalk which helps the ribosome interact with GTP-bound translation factors. Is thus essential for accurate translation. This Limosilactobacillus reuteri (strain DSM 20016) (Lactobacillus reuteri) protein is Large ribosomal subunit protein bL12.